A 159-amino-acid chain; its full sequence is uncharacterized protein (159 aa).

An N-acetyltransferase domain is found at 1–139 (MNIIPTCQVP…TARKMKPEIP (139 aa)).

This is an uncharacterized protein from Bacillus subtilis (strain 168).